A 610-amino-acid chain; its full sequence is Serine/threonine-protein kinase VRK1 (610 aa).

A Protein kinase domain is found at 32–384 (FIVGKQFATG…PRKRTTRKAV (353 aa)). ATP-binding positions include 38-46 (FATGGFGRI) and K61. The active-site Proton acceptor is D167. Disordered stretches follow at residues 317 to 476 (IQKT…NKVA), 498 to 530 (ISVASDKSPTTSTPSSSSGLRSKRKSSEDVGEG), 544 to 577 (KKAKTKSGISSATKASPTELRRVPGVRNFPKGRR), and 590 to 610 (ERLASRQTKPTFDDSSCSSEV). The span at 352-373 (AVKEESDNKDNDEVEVKPEKKA) shows a compositional bias: basic and acidic residues. Acidic residues predominate over residues 388-397 (NDSDDNEEQY). Positions 447–458 (TTPSSAASTSRS) are enriched in low complexity. The segment covering 465–474 (LTSSTASSNK) has biased composition (polar residues). Low complexity predominate over residues 502-517 (SDKSPTTSTPSSSSGL). Polar residues-rich tracts occupy residues 550–559 (SGISSATKAS) and 594–610 (SRQTKPTFDDSSCSSEV).

Belongs to the protein kinase superfamily. CK1 Ser/Thr protein kinase family. VRK subfamily. Autophosphorylates in vitro. In terms of tissue distribution, present in germ cells at all stages of progression from the mitotic zone to mature oocytes, but not in maturing spermatids (at the protein level). Expressed in the ventral nerve cord and vulva cells.

The protein resides in the nucleus. Its subcellular location is the cytoplasm. It is found in the cajal body. The enzyme catalyses L-seryl-[protein] + ATP = O-phospho-L-seryl-[protein] + ADP + H(+). The catalysed reaction is L-threonyl-[protein] + ATP = O-phospho-L-threonyl-[protein] + ADP + H(+). Its function is as follows. Serine/threonine kinase that phosphorylates baf-1, thus regulating the association of baf-1 with chromatin and nuclear membrane proteins during nuclear envelope formation. May act through the egl-17 signaling pathway. Essential in hermaphrodites for formation of the vulva, uterus, and uterine seam cells and for development and maintenance of the somatic gonad and thus the germ line. Acts to prevent cep-1 from triggering an inappropriate cell cycle arrest, thereby promoting germ cell proliferation. Regulates anchor cell polarity and the timing of anchor cell invasion through the basement membranes separating vulval and somatic gonadal cells during the L3 larval stage. The sequence is that of Serine/threonine-protein kinase VRK1 from Caenorhabditis elegans.